Reading from the N-terminus, the 367-residue chain is Glutamate 5-kinase (367 aa).

K10 contacts ATP. Substrate-binding residues include S50, D137, and N149. Residues 169–170 (TD) and 211–217 (TGGMSTK) contribute to the ATP site. The PUA domain occupies 275–353 (AGEITVDEGA…QEIDAILGYE (79 aa)).

Belongs to the glutamate 5-kinase family.

It is found in the cytoplasm. It catalyses the reaction L-glutamate + ATP = L-glutamyl 5-phosphate + ADP. Its pathway is amino-acid biosynthesis; L-proline biosynthesis; L-glutamate 5-semialdehyde from L-glutamate: step 1/2. In terms of biological role, catalyzes the transfer of a phosphate group to glutamate to form L-glutamate 5-phosphate. In Escherichia coli O81 (strain ED1a), this protein is Glutamate 5-kinase.